Reading from the N-terminus, the 824-residue chain is AMP deaminase 2 (824 aa).

Positions Met-1–Ala-43 are disordered. Positions Ser-10–Ala-20 are enriched in basic residues. Ser-21 bears the Phosphoserine mark. The segment covering Ser-21–Ser-33 has biased composition (low complexity). Omega-N-methylarginine is present on Arg-44. Ser-45, Ser-63, and Ser-79 each carry phosphoserine. A Phosphotyrosine modification is found at Tyr-90. Phosphoserine is present on residues Ser-96 and Ser-113. Thr-133 is modified (phosphothreonine). Residues Ser-135 and Ser-137 each carry the phosphoserine modification. Zn(2+) contacts are provided by His-364 and His-366. Substrate contacts are provided by residues His-366 and Lys-435–Tyr-440. A Zn(2+)-binding site is contributed by His-633. Glu-636 serves as a coordination point for substrate. Catalysis depends on His-655, which acts as the Proton acceptor. Residue Asp-710 coordinates Zn(2+). Substrate is bound at residue Asp-711–Gln-714.

This sequence belongs to the metallo-dependent hydrolases superfamily. Adenosine and AMP deaminases family. Homotetramer. The cofactor is Zn(2+).

It carries out the reaction AMP + H2O + H(+) = IMP + NH4(+). The protein operates within purine metabolism; IMP biosynthesis via salvage pathway; IMP from AMP: step 1/1. Functionally, AMP deaminase plays a critical role in energy metabolism. Catalyzes the deamination of AMP to IMP and plays an important role in the purine nucleotide cycle. The chain is AMP deaminase 2 from Rattus norvegicus (Rat).